The chain runs to 1446 residues: E3 ubiquitin-protein ligase listerin (1446 aa).

HEAT repeat units lie at residues 71–108 (QTREKGLKELMELINTENSSIESSYEHFCGLVAQLTTD), 115–153 (MLTMKVISQFLTKLKKSASKGLKKIIPFVLFAKSDVTNG), 324–361 (SLQKGIYPRLLNLIRKKGNHWRVLKHYLLPAVSVLLQK), 363–399 (ENPALITSIITSFTDNLPWQAEASMNAIHCWFCTFSD), 413–450 (EILKDLSPLIVEMSNQSMHFNTAEATECISGLIHWIIE), 630–669 (AENVDFLISLLQSLDSKEDPEERKNLVLKLLSALFDAEDE), 684–721 (GDFEQFFEKLFANMEEEDAERVLEIAARFDKLVGFCDA), 1046–1083 (LRALFVISEFPTSFSNDDDVANQEFIPELSVFKYPAFQ), 1107–1144 (SVARLLMPIMFKLENAAALKSNEDSELPVSTNRRKLSL), 1165–1202 (LLDLTLLPLENTKDSGFSQEHRVAYCDVIDPFFKNALN), and 1251–1289 (FKSMTLLPAAIRLFYKGMPNCFMPMFQETVTKYASRLLI). The RING-type zinc-finger motif lies at 1395–1442 (CTICMMTVHQQTHQLPKIKCKQCKNKFHSNCLYKWFESSNQSTCPLCR).

Belongs to the LTN1 family. Component of the ribosome quality control complex (RQC), composed of at least the E3 ubiquitin ligase ltn1 and nemf. The complex probably also contains tcf25 as well as vcp/p97 and its ubiquitin-binding cofactors. RQC forms a stable complex with 60S ribosomal subunits.

The protein localises to the cytoplasm. Its subcellular location is the cytosol. It catalyses the reaction S-ubiquitinyl-[E2 ubiquitin-conjugating enzyme]-L-cysteine + [acceptor protein]-L-lysine = [E2 ubiquitin-conjugating enzyme]-L-cysteine + N(6)-ubiquitinyl-[acceptor protein]-L-lysine.. Its pathway is protein modification; protein ubiquitination. In terms of biological role, E3 ubiquitin-protein ligase. Component of the ribosome quality control complex (RQC), a ribosome-associated complex that mediates ubiquitination and extraction of incompletely synthesized nascent chains for proteasomal degradation. Ubiquitination leads to vcp/p97 recruitment for extraction and degradation of the incomplete translation product. The chain is E3 ubiquitin-protein ligase listerin from Caenorhabditis elegans.